The chain runs to 239 residues: Large ribosomal subunit protein uL1 (239 aa).

It belongs to the universal ribosomal protein uL1 family. As to quaternary structure, part of the 50S ribosomal subunit.

Binds directly to 23S rRNA. The L1 stalk is quite mobile in the ribosome, and is involved in E site tRNA release. Functionally, protein L1 is also a translational repressor protein, it controls the translation of the L11 operon by binding to its mRNA. The chain is Large ribosomal subunit protein uL1 from Rickettsia akari (strain Hartford).